The sequence spans 104 residues: Small ribosomal subunit protein uS10 (104 aa).

It belongs to the universal ribosomal protein uS10 family. In terms of assembly, part of the 30S ribosomal subunit.

Its function is as follows. Involved in the binding of tRNA to the ribosomes. This Helicobacter pylori (strain J99 / ATCC 700824) (Campylobacter pylori J99) protein is Small ribosomal subunit protein uS10.